The sequence spans 265 residues: 5'-nucleotidase SurE (265 aa).

Residues aspartate 8, aspartate 9, serine 40, and asparagine 98 each coordinate a divalent metal cation.

It belongs to the SurE nucleotidase family. Requires a divalent metal cation as cofactor.

The protein resides in the cytoplasm. The catalysed reaction is a ribonucleoside 5'-phosphate + H2O = a ribonucleoside + phosphate. Nucleotidase that shows phosphatase activity on nucleoside 5'-monophosphates. In Thermosynechococcus vestitus (strain NIES-2133 / IAM M-273 / BP-1), this protein is 5'-nucleotidase SurE.